The chain runs to 307 residues: Nucleotide-binding protein Achl_1824 (307 aa).

30–37 (GMSGAGRS) provides a ligand contact to ATP. 81-84 (DVRS) serves as a coordination point for GTP.

This sequence belongs to the RapZ-like family.

In terms of biological role, displays ATPase and GTPase activities. This chain is Nucleotide-binding protein Achl_1824, found in Pseudarthrobacter chlorophenolicus (strain ATCC 700700 / DSM 12829 / CIP 107037 / JCM 12360 / KCTC 9906 / NCIMB 13794 / A6) (Arthrobacter chlorophenolicus).